A 381-amino-acid polypeptide reads, in one-letter code: Chaperone protein DnaJ (381 aa).

The region spanning 5-70 is the J domain; the sequence is DFYEVLGVGR…QKKAAYDQYG (66 aa). The CR-type zinc finger occupies 136–214; sequence GVSKEIEVPT…CHGQGRKQKT (79 aa). Zn(2+)-binding residues include C149, C152, C166, C169, C188, C191, C202, and C205. 4 CXXCXGXG motif repeats span residues 149–156, 166–173, 188–195, and 202–209; these read CDTCDGSG, CGTCHGHG, CPTCHGKG, and CNECHGQG.

It belongs to the DnaJ family. Homodimer. It depends on Zn(2+) as a cofactor.

The protein localises to the cytoplasm. Participates actively in the response to hyperosmotic and heat shock by preventing the aggregation of stress-denatured proteins and by disaggregating proteins, also in an autonomous, DnaK-independent fashion. Unfolded proteins bind initially to DnaJ; upon interaction with the DnaJ-bound protein, DnaK hydrolyzes its bound ATP, resulting in the formation of a stable complex. GrpE releases ADP from DnaK; ATP binding to DnaK triggers the release of the substrate protein, thus completing the reaction cycle. Several rounds of ATP-dependent interactions between DnaJ, DnaK and GrpE are required for fully efficient folding. Also involved, together with DnaK and GrpE, in the DNA replication of plasmids through activation of initiation proteins. The polypeptide is Chaperone protein DnaJ (Vibrio campbellii (strain ATCC BAA-1116)).